Here is a 350-residue protein sequence, read N- to C-terminus: Cytosolic Fe-S cluster assembly factor NBP35 (350 aa).

A disordered region spans residues 1-30 (MENGDIPEDANEHCPGPQSESAGKSDSCAG). Positions 14, 28, 31, and 37 each coordinate [4Fe-4S] cluster. 67–74 (GKGGVGKS) is a binding site for ATP.

It belongs to the Mrp/NBP35 ATP-binding proteins family. NUBP1/NBP35 subfamily. In terms of assembly, homodimer and homotetramer. Predominantly homodimeric. It depends on [4Fe-4S] cluster as a cofactor.

Its subcellular location is the cytoplasm. Component of the cytosolic iron-sulfur (Fe-S) protein assembly (CIA) machinery. Required for maturation of extramitochondrial Fe-S proteins. Functions as a Fe-S scaffold, mediating the de novo assembly of an Fe-S cluster and its transfer to target apoproteins. Essential for embryo development. This is Cytosolic Fe-S cluster assembly factor NBP35 from Arabidopsis thaliana (Mouse-ear cress).